The chain runs to 388 residues: MNLHEYQAKKLFAEYGLPVSEGYACATPQEAAEAADKIGGTTWVVKCQVHAGGRGKAGGVKLAKSKDEIRAFAQNWLGKNLVTYQTDANGQPVTKILVESCTDIAKELYLGAVVDRGSRRVVFMASTEGGVDIEKIAHETPELIHKAAIDPLVGPQAYQARELAFKLGLVGDQIKQFTKIFMGLGQMFLDCDFALLEINPLVITAQGNLHCLDGKINIDANALYRQPKLREMHDPSQDDPREAHAAQWELNYVALDGNIGCMVNGAGLAMGTMDIVNLHGGSPANFLDVGGGATKERVTEAFKIILSDSKVQAVLVNIFGGIVRCDMIAEGIIGAVKEVGVKVPVVVRLEGNNAELGARKLADSGLNIIAATSLTDAAQQVVKAAEAK.

The ATP-grasp domain maps to 9–244; sequence KKLFAEYGLP…PSQDDPREAH (236 aa). ATP contacts are provided by residues K46, 53–55, E99, T102, and E107; that span reads GRG. Mg(2+) is bound by residues N199 and D213. Residues N264 and 321–323 contribute to the substrate site; that span reads GIV.

Belongs to the succinate/malate CoA ligase beta subunit family. Heterotetramer of two alpha and two beta subunits. Mg(2+) is required as a cofactor.

The enzyme catalyses succinate + ATP + CoA = succinyl-CoA + ADP + phosphate. It carries out the reaction GTP + succinate + CoA = succinyl-CoA + GDP + phosphate. It participates in carbohydrate metabolism; tricarboxylic acid cycle; succinate from succinyl-CoA (ligase route): step 1/1. Succinyl-CoA synthetase functions in the citric acid cycle (TCA), coupling the hydrolysis of succinyl-CoA to the synthesis of either ATP or GTP and thus represents the only step of substrate-level phosphorylation in the TCA. The beta subunit provides nucleotide specificity of the enzyme and binds the substrate succinate, while the binding sites for coenzyme A and phosphate are found in the alpha subunit. This Aeromonas salmonicida (strain A449) protein is Succinate--CoA ligase [ADP-forming] subunit beta.